We begin with the raw amino-acid sequence, 218 residues long: Glutathione S-transferase Mu 2 (218 aa).

In terms of domain architecture, GST N-terminal spans 2–88 (PIILGYWNIR…YIARKHNLCG (87 aa)). 7-8 (YW) serves as a coordination point for glutathione. Residues serine 27 and serine 44 each carry the phosphoserine modification. Glutathione is bound by residues 43–46 (RSQW), lysine 50, 59–60 (NL), and 72–73 (QS). In terms of domain architecture, GST C-terminal spans 90-208 (TEKEKIQEDI…KSSRFLPRPV (119 aa)). Substrate is bound at residue tyrosine 116.

The protein belongs to the GST superfamily. Mu family. In terms of assembly, homodimer.

The protein resides in the cytoplasm. The enzyme catalyses RX + glutathione = an S-substituted glutathione + a halide anion + H(+). The catalysed reaction is 11(S)-hydroxy-14(S),15(S)-epoxy-(5Z,8Z,12E)-eicosatrienoate + glutathione = (11S,15S)-dihydroxy-14(R)-S-glutathionyl-(5Z,8Z,12E)-eicosatrienoate. Its function is as follows. Conjugation of reduced glutathione to a wide number of exogenous and endogenous hydrophobic electrophiles. Participates in the formation of novel hepoxilin regioisomers. The chain is Glutathione S-transferase Mu 2 (GSTM2) from Pongo abelii (Sumatran orangutan).